Here is a 439-residue protein sequence, read N- to C-terminus: tRNA-2-methylthio-N(6)-dimethylallyladenosine synthase (439 aa).

One can recognise an MTTase N-terminal domain in the interval 1–117 (MKFYIRTFGC…IGNLVKRALN (117 aa)). Positions 10, 46, 80, 153, 157, and 160 each coordinate [4Fe-4S] cluster. Residues 139–371 (PISKHHAWIT…MELQKRINLE (233 aa)) enclose the Radical SAM core domain. Positions 369–436 (NLEENEKYLE…PGPLYGEVVN (68 aa)) constitute a TRAM domain.

It belongs to the methylthiotransferase family. MiaB subfamily. As to quaternary structure, monomer. Requires [4Fe-4S] cluster as cofactor.

The protein resides in the cytoplasm. It carries out the reaction N(6)-dimethylallyladenosine(37) in tRNA + (sulfur carrier)-SH + AH2 + 2 S-adenosyl-L-methionine = 2-methylsulfanyl-N(6)-dimethylallyladenosine(37) in tRNA + (sulfur carrier)-H + 5'-deoxyadenosine + L-methionine + A + S-adenosyl-L-homocysteine + 2 H(+). In terms of biological role, catalyzes the methylthiolation of N6-(dimethylallyl)adenosine (i(6)A), leading to the formation of 2-methylthio-N6-(dimethylallyl)adenosine (ms(2)i(6)A) at position 37 in tRNAs that read codons beginning with uridine. The chain is tRNA-2-methylthio-N(6)-dimethylallyladenosine synthase from Petrotoga mobilis (strain DSM 10674 / SJ95).